A 138-amino-acid polypeptide reads, in one-letter code: ATP synthase epsilon chain (138 aa).

Belongs to the ATPase epsilon chain family. As to quaternary structure, F-type ATPases have 2 components, CF(1) - the catalytic core - and CF(0) - the membrane proton channel. CF(1) has five subunits: alpha(3), beta(3), gamma(1), delta(1), epsilon(1). CF(0) has three main subunits: a, b and c.

Its subcellular location is the cell inner membrane. Its function is as follows. Produces ATP from ADP in the presence of a proton gradient across the membrane. This Wigglesworthia glossinidia brevipalpis protein is ATP synthase epsilon chain.